The following is an 82-amino-acid chain: Cobrotoxin-b (82 aa).

An N-terminal signal peptide occupies residues 1–21 (MKTLLLTLLVVTIVCLDLGYT). Cystine bridges form between Cys24–Cys44, Cys38–Cys61, Cys63–Cys74, and Cys75–Cys80.

Belongs to the three-finger toxin family. Short-chain subfamily. Type I alpha-neurotoxin sub-subfamily. In terms of tissue distribution, expressed by the venom gland.

The protein resides in the secreted. Functionally, binds to muscle nicotinic acetylcholine receptor (nAChR) and inhibit acetylcholine from binding to the receptor, thereby impairing neuromuscular transmission. Produces peripheral paralysis by blocking neuromuscular transmission at the postsynaptic site. Has a lower toxicity than cobrotoxin. This Naja atra (Chinese cobra) protein is Cobrotoxin-b.